A 436-amino-acid polypeptide reads, in one-letter code: UDP-N-acetylmuramate--L-alanine ligase (436 aa).

108–114 lines the ATP pocket; the sequence is GAHGKTS.

The protein belongs to the MurCDEF family.

It localises to the cytoplasm. It catalyses the reaction UDP-N-acetyl-alpha-D-muramate + L-alanine + ATP = UDP-N-acetyl-alpha-D-muramoyl-L-alanine + ADP + phosphate + H(+). It functions in the pathway cell wall biogenesis; peptidoglycan biosynthesis. In terms of biological role, cell wall formation. In Bacillus cereus (strain B4264), this protein is UDP-N-acetylmuramate--L-alanine ligase.